A 1155-amino-acid chain; its full sequence is Probable translation initiation factor IF-2 (1155 aa).

A DOD-type homing endonuclease domain is found at 237 to 367 (FAGVMFGDGC…LSILLLRFEI (131 aa)). The 221-residue stretch at 561–781 (TTETHNFIAN…VAGLAQKFLE (221 aa)) folds into the tr-type G domain. GTP-binding positions include 634–638 (DTPGH) and 688–691 (NKID).

It belongs to the TRAFAC class translation factor GTPase superfamily. Classic translation factor GTPase family. IF-2 subfamily. This protein undergoes a protein self splicing that involves a post-translational excision of the intervening region (intein) followed by peptide ligation.

Its function is as follows. Function in general translation initiation by promoting the binding of the formylmethionine-tRNA to ribosomes. Seems to function along with eIF-2. In Methanocaldococcus jannaschii (strain ATCC 43067 / DSM 2661 / JAL-1 / JCM 10045 / NBRC 100440) (Methanococcus jannaschii), this protein is Probable translation initiation factor IF-2 (infB).